Reading from the N-terminus, the 790-residue chain is Penicillin-binding protein 1A (790 aa).

Residues 1-20 lie on the Cytoplasmic side of the membrane; that stretch reads MANVRKRRKKKNEHKALRLT. A helical; Signal-anchor for type II membrane protein transmembrane segment spans residues 21–41; sequence FITLLMVFLFSCVAAAGVGLA. Topologically, residues 42-790 are extracellular; the sequence is MIKAAPPLDV…RKRKMIKPQI (749 aa). A transglycosylase region spans residues 61-230; that stretch reads SVIYDDKNKL…PQSPSTFYNA (170 aa). Glutamate 100 serves as the catalytic Proton donor; for transglycosylase activity. The transpeptidase stretch occupies residues 363–656; that stretch reads ASVSIVDYKT…AALIWKLIMG (294 aa). Serine 402 functions as the Acyl-ester intermediate; for transpeptidase activity in the catalytic mechanism. The interval 720–790 is disordered; that stretch reads NKDKDDDDDD…RKRKMIKPQI (71 aa). Residues 724–740 are compositionally biased toward acidic residues; sequence DDDDDDKDKDKEDEEEN. A compositionally biased stretch (basic and acidic residues) spans 741 to 779; that stretch reads KDEKNEDKKEAKDNTKNKDKDKKKDNDRKIDMDKKPDSS. The segment covering 780–790 has biased composition (basic residues); it reads KRKRKMIKPQI.

In the N-terminal section; belongs to the glycosyltransferase 51 family. It in the C-terminal section; belongs to the transpeptidase family.

The protein localises to the cell membrane. It carries out the reaction [GlcNAc-(1-&gt;4)-Mur2Ac(oyl-L-Ala-gamma-D-Glu-L-Lys-D-Ala-D-Ala)](n)-di-trans,octa-cis-undecaprenyl diphosphate + beta-D-GlcNAc-(1-&gt;4)-Mur2Ac(oyl-L-Ala-gamma-D-Glu-L-Lys-D-Ala-D-Ala)-di-trans,octa-cis-undecaprenyl diphosphate = [GlcNAc-(1-&gt;4)-Mur2Ac(oyl-L-Ala-gamma-D-Glu-L-Lys-D-Ala-D-Ala)](n+1)-di-trans,octa-cis-undecaprenyl diphosphate + di-trans,octa-cis-undecaprenyl diphosphate + H(+). It catalyses the reaction Preferential cleavage: (Ac)2-L-Lys-D-Ala-|-D-Ala. Also transpeptidation of peptidyl-alanyl moieties that are N-acyl substituents of D-alanine.. The protein operates within cell wall biogenesis; peptidoglycan biosynthesis. Cell wall formation. Synthesis of cross-linked peptidoglycan from the lipid intermediates. The enzyme has a penicillin-insensitive transglycosylase N-terminal domain (formation of linear glycan strands) and a penicillin-sensitive transpeptidase C-terminal domain (cross-linking of the peptide subunits). This chain is Penicillin-binding protein 1A (pbpA), found in Clostridium tetani (strain Massachusetts / E88).